The following is a 333-amino-acid chain: Thiamine-monophosphate kinase (333 aa).

Residues D35, T50, and D51 each coordinate Mg(2+). H58 is a substrate binding site. D80 contacts Mg(2+). ATP-binding positions include Y111, 128-129, and R153; that span reads GD. D129 is a binding site for Mg(2+). Residue D230 coordinates Mg(2+). Residue S232 participates in ATP binding. D233 serves as a coordination point for Mg(2+). 2 residues coordinate substrate: E278 and F330.

The protein belongs to the thiamine-monophosphate kinase family.

The enzyme catalyses thiamine phosphate + ATP = thiamine diphosphate + ADP. It functions in the pathway cofactor biosynthesis; thiamine diphosphate biosynthesis; thiamine diphosphate from thiamine phosphate: step 1/1. Catalyzes the ATP-dependent phosphorylation of thiamine-monophosphate (TMP) to form thiamine-pyrophosphate (TPP), the active form of vitamin B1. In Prochlorococcus marinus (strain SARG / CCMP1375 / SS120), this protein is Thiamine-monophosphate kinase.